An 81-amino-acid chain; its full sequence is Metallocarboxypeptidase inhibitor (81 aa).

Positions 1–15 are cleaved as a signal peptide; sequence MFLLVFLCCLHLVIS. Intrachain disulfides connect C25/C48, C32/C76, C33/C57, and C36/C72.

Functionally, tightly binding, competitive inhibitor of different types of pancreatic-like carboxypeptidases. Inhibits human CPA4. The polypeptide is Metallocarboxypeptidase inhibitor (Hirudo medicinalis (Medicinal leech)).